We begin with the raw amino-acid sequence, 430 residues long: Adenylosuccinate synthetase (430 aa).

GTP is bound by residues glycine 12–lysine 18 and glycine 40–threonine 42. Aspartate 13 acts as the Proton acceptor in catalysis. Mg(2+) contacts are provided by aspartate 13 and glycine 40. Residues aspartate 13–lysine 16, asparagine 38–histidine 41, threonine 129, arginine 143, glutamine 224, threonine 239, and arginine 303 contribute to the IMP site. Histidine 41 acts as the Proton donor in catalysis. Threonine 299–arginine 305 contributes to the substrate binding site. Residues arginine 305, lysine 331–aspartate 333, and serine 413–glycine 415 contribute to the GTP site.

The protein belongs to the adenylosuccinate synthetase family. In terms of assembly, homodimer. Mg(2+) serves as cofactor.

The protein localises to the cytoplasm. It carries out the reaction IMP + L-aspartate + GTP = N(6)-(1,2-dicarboxyethyl)-AMP + GDP + phosphate + 2 H(+). Its pathway is purine metabolism; AMP biosynthesis via de novo pathway; AMP from IMP: step 1/2. In terms of biological role, plays an important role in the de novo pathway of purine nucleotide biosynthesis. Catalyzes the first committed step in the biosynthesis of AMP from IMP. This chain is Adenylosuccinate synthetase, found in Ehrlichia chaffeensis (strain ATCC CRL-10679 / Arkansas).